Reading from the N-terminus, the 338-residue chain is 1-aminocyclopropane-1-carboxylate deaminase (338 aa).

At Lys-51 the chain carries N6-(pyridoxal phosphate)lysine. The active-site Nucleophile is the Ser-78.

This sequence belongs to the ACC deaminase/D-cysteine desulfhydrase family. In terms of assembly, homotrimer. Pyridoxal 5'-phosphate is required as a cofactor.

The enzyme catalyses 1-aminocyclopropane-1-carboxylate + H2O = 2-oxobutanoate + NH4(+). Catalyzes a cyclopropane ring-opening reaction, the irreversible conversion of 1-aminocyclopropane-1-carboxylate (ACC) to ammonia and alpha-ketobutyrate. Allows growth on ACC as a nitrogen source. The chain is 1-aminocyclopropane-1-carboxylate deaminase from Burkholderia ambifaria (strain ATCC BAA-244 / DSM 16087 / CCUG 44356 / LMG 19182 / AMMD) (Burkholderia cepacia (strain AMMD)).